Here is a 329-residue protein sequence, read N- to C-terminus: GTPase Obg (329 aa).

Residues 1–159 enclose the Obg domain; sequence MQFIDQARIT…WFLQLELKLL (159 aa). The region spanning 160 to 328 is the OBG-type G domain; sequence AEVGIIGLPN…LLAQVWKELG (169 aa). Residues 166-173, 191-195, 213-216, 280-283, and 309-311 contribute to the ATP site; these read GLPNAGKS, FTTLV, DIPG, NKQE, and SAA. Mg(2+) is bound by residues serine 173 and threonine 193.

Belongs to the TRAFAC class OBG-HflX-like GTPase superfamily. OBG GTPase family. In terms of assembly, monomer. Mg(2+) is required as a cofactor.

Its subcellular location is the cytoplasm. Functionally, an essential GTPase which binds GTP, GDP and possibly (p)ppGpp with moderate affinity, with high nucleotide exchange rates and a fairly low GTP hydrolysis rate. Plays a role in control of the cell cycle, stress response, ribosome biogenesis and in those bacteria that undergo differentiation, in morphogenesis control. This Prochlorococcus marinus (strain MIT 9303) protein is GTPase Obg.